Here is a 305-residue protein sequence, read N- to C-terminus: Autophagy-related protein 27 (305 aa).

Residues 1 to 22 form the signal peptide; the sequence is MARYKGLSILSLFAVFSSLASA. The Lumenal segment spans residues 23–242; it reads ELDCSNIKVD…EDGGSAPSGH (220 aa). In terms of domain architecture, MRH spans 24–231; the sequence is LDCSNIKVDG…EWKTKYACEN (208 aa). Disulfide bonds link Cys-26/Cys-66 and Cys-74/Cys-81. N-linked (GlcNAc...) asparagine glycosylation occurs at Asn-58. Asn-85 carries N-linked (GlcNAc...) asparagine glycosylation. The cysteines at positions 156 and 229 are disulfide-linked. Positions 163-202 are disordered; the sequence is LEGLESPKPDGDKKKDGEKKDDDKKDNKDKEGKSKRDGEE. The helical transmembrane segment at 243 to 263 threads the bilayer; sequence WGFFTWVIVLYVVLVSLPLLS. Topologically, residues 264–305 are cytoplasmic; that stretch reads ERVTNVRCHSQPVPVHFGLSDIRLVAQLQPVWSSRVGLASSQ.

The protein belongs to the ATG27 family.

It is found in the cytoplasmic vesicle membrane. It localises to the golgi apparatus membrane. The protein resides in the mitochondrion membrane. Its subcellular location is the preautophagosomal structure membrane. Effector of phosphatidylinositol 3-phosphate kinase signaling. Regulates the cytoplasm to vacuole transport (Cvt) vesicle formation. Plays a role in ATG protein retrieval from the pre-autophagosomal structure (PAS). The sequence is that of Autophagy-related protein 27 from Arthroderma benhamiae (strain ATCC MYA-4681 / CBS 112371) (Trichophyton mentagrophytes).